Here is a 1074-residue protein sequence, read N- to C-terminus: Transmembrane protein 132E (1074 aa).

A signal peptide spans 1–25; sequence MAPGMSGRGGAALLCLSALLAHASG. Residues 26–893 lie on the Extracellular side of the membrane; that stretch reads RSHPASPSPP…LTDLEIGMYA (868 aa). 2 N-linked (GlcNAc...) asparagine glycosylation sites follow: asparagine 70 and asparagine 91. Disordered stretches follow at residues 202–226 and 241–264; these read PPAP…ATGE and ASGG…ESPT. The span at 243-256 shows a compositional bias: gly residues; sequence GGCGGSRRGAGPGV. 2 N-linked (GlcNAc...) asparagine glycosylation sites follow: asparagine 318 and asparagine 399. Disordered stretches follow at residues 563 to 585 and 814 to 867; these read RSVR…ASRG and GRDE…VPPT. Residues 841 to 862 show a composition bias toward low complexity; it reads GAGPPGSALPAPEAPGPGTASP. A helical membrane pass occupies residues 894–914; sequence LLGVFCLAILVFLINCIVFVL. Over 915 to 1074 the chain is Cytoplasmic; that stretch reads RYRHKRIPPE…NYMRRIKEIA (160 aa). The segment at 946–1063 is disordered; that stretch reads VQGELSPPAG…PTRPTAPPDL (118 aa). Residues 972–984 are compositionally biased toward low complexity; the sequence is SGSSQTSVQSQVH. Residues 1034-1044 are compositionally biased toward acidic residues; it reads GEEDEEEEEDL.

The protein belongs to the TMEM132 family.

The protein localises to the membrane. Its function is as follows. Required for normal inner ear hair cell function and hearing. The protein is Transmembrane protein 132E of Homo sapiens (Human).